Here is a 207-residue protein sequence, read N- to C-terminus: Ribosomal RNA small subunit methyltransferase G (207 aa).

S-adenosyl-L-methionine is bound by residues glycine 75, methionine 80, 126-127 (VE), and arginine 141.

It belongs to the methyltransferase superfamily. RNA methyltransferase RsmG family.

It is found in the cytoplasm. It carries out the reaction guanosine(527) in 16S rRNA + S-adenosyl-L-methionine = N(7)-methylguanosine(527) in 16S rRNA + S-adenosyl-L-homocysteine. Functionally, specifically methylates the N7 position of guanine in position 527 of 16S rRNA. The polypeptide is Ribosomal RNA small subunit methyltransferase G (Laribacter hongkongensis (strain HLHK9)).